The sequence spans 212 residues: Transcription factor MYB8 (212 aa).

HTH myb-type domains lie at K9–L61 and R62–L116. DNA-binding regions (H-T-H motif) lie at residues W37–L61 and W89–I112.

It localises to the nucleus. Transcription activator. This chain is Transcription factor MYB8, found in Arabidopsis thaliana (Mouse-ear cress).